Consider the following 43-residue polypeptide: Mu-conotoxin-like CalTx 12.2.1E (43 aa).

Residue R1 is a propeptide. 4 cysteine pairs are disulfide-bonded: C4-C16, C11-C24, C18-C29, and C23-C35. 6'-bromotryptophan is present on W31. Residue P36 is modified to 4-hydroxyproline. A 6'-bromotryptophan modification is found at W40.

As to expression, expressed by the venom duct.

The protein resides in the secreted. In terms of biological role, mu-conotoxins block voltage-gated sodium channels. This toxin reversibly blocks voltage-gated sodium channel in cephalopods, with no alteration in the voltage dependence of sodium conductance or on the kinetics of inactivation. This is Mu-conotoxin-like CalTx 12.2.1E from Californiconus californicus (California cone).